Reading from the N-terminus, the 490-residue chain is Probable cytochrome P450 518B1 (490 aa).

Residues 2 to 22 form a helical membrane-spanning segment; it reads LTNIIILIILYLFYDFCYKNF. C437 contacts heme.

The protein belongs to the cytochrome P450 family. Heme serves as cofactor.

The protein resides in the membrane. In Dictyostelium discoideum (Social amoeba), this protein is Probable cytochrome P450 518B1 (cyp518B1).